A 203-amino-acid chain; its full sequence is E3 ubiquitin-protein ligase rnf152-B (203 aa).

The RING-type zinc finger occupies 12 to 55 (CQICFNYYSPRRRPKLLDCKHTCCSVCLQQMRASQKDLRCPWCR). The chain crosses the membrane as a helical span at residues 167–187 (SGVCTVILVACVLVFLLGIVL).

Belongs to the RNF152 family.

The protein resides in the lysosome membrane. It catalyses the reaction S-ubiquitinyl-[E2 ubiquitin-conjugating enzyme]-L-cysteine + [acceptor protein]-L-lysine = [E2 ubiquitin-conjugating enzyme]-L-cysteine + N(6)-ubiquitinyl-[acceptor protein]-L-lysine.. The protein operates within protein modification; protein ubiquitination. Its function is as follows. E3 ubiquitin-protein ligase that acts as a negative regulator of mTORC1 signaling by mediating ubiquitination of RagA/RRAGA and RHEB. Catalyzes 'Lys-63'-linked polyubiquitination of RagA/RRAGA in response to amino acid starvation, thereby regulating mTORC1 signaling. Also mediates monoubiquitination of RHEB, promoting its association with the TSC-TBC complex and subsequent inhibition. Also mediates 'Lys-48'-linked polyubiquitination of target proteins and their subsequent targeting to the proteasome for degradation. In Xenopus laevis (African clawed frog), this protein is E3 ubiquitin-protein ligase rnf152-B.